The chain runs to 686 residues: MTARRILVTSALPYANGQIHIGHLVEYIQTDIWVRFQRMMGNEVYYVGADDTHGTPVMLRAEKEGITPKALIDRVWTEHKRDFDSFLVSFDNYYSTDAEENRELCEKIYLALKAEDLIAEREVEQFFDPVKNMFLPDRFIKGECPKCGAKDQYGDSCEVCGTTYVPTDLKNPYSVVSGATPVRKSSAHYFFKLSDPRCETFLREWVADLAQPEAANKMQEWLGAEGEASTLSDWDISRDAPYFGFEIPGAPGKYFYVWLDAPIGYYASFQNLAAKKGIDFDAWVGPHSTAEQYHFIGKDILYFHTLFWPAMLRFSGYRTPTNVFAHGFLTVDGAKMSKSRGTFITAQSYVDTGMNPEWLRYYFAAKLNASMEDLDLNLDDFIARVNSDLIGKYVNIASRAAGFLVKRFEGKVDEAALAHPLLEQLRQAAPQVAHLYEAREYSKALRLVMELTDAVNAFVDTEKPWELAKDENKRAALHAACSVSLEAFRLLTVYLKPVVPNVAAGVERFLNVEPLDWRAIDKQLSAASPVQAYQHLMTRVDAKQVDALLAANRESLQATAAPAAAGAAIEPIADTITIDDFAKVDLRVAKIVECQKVEGSNKLLQLTLDLGEGRTRNVFSGIQSAYTPEQLVGKLTVVVANLAPRKMKFGVSEGMVLAASAADEKATPGLYILEPHEGAVPGMRIG.

A 'HIGH' region motif is present at residues 13–23 (PYANGQIHIGH). Residues Cys144, Cys147, Cys157, and Cys160 each contribute to the Zn(2+) site. Residues 335 to 339 (KMSKS) carry the 'KMSKS' region motif. Lys338 lines the ATP pocket. The 107-residue stretch at 580-686 (DFAKVDLRVA…EGAVPGMRIG (107 aa)) folds into the tRNA-binding domain.

It belongs to the class-I aminoacyl-tRNA synthetase family. MetG type 1 subfamily. Homodimer. The cofactor is Zn(2+).

The protein resides in the cytoplasm. It catalyses the reaction tRNA(Met) + L-methionine + ATP = L-methionyl-tRNA(Met) + AMP + diphosphate. Functionally, is required not only for elongation of protein synthesis but also for the initiation of all mRNA translation through initiator tRNA(fMet) aminoacylation. This is Methionine--tRNA ligase from Cupriavidus necator (strain ATCC 17699 / DSM 428 / KCTC 22496 / NCIMB 10442 / H16 / Stanier 337) (Ralstonia eutropha).